Here is a 525-residue protein sequence, read N- to C-terminus: GMP synthase [glutamine-hydrolyzing] (525 aa).

Positions 9 to 207 (RILILDFGSQ…VLQICQCEPL (199 aa)) constitute a Glutamine amidotransferase type-1 domain. The active-site Nucleophile is Cys86. Active-site residues include His181 and Glu183. Positions 208–400 (WTPRNIIDQT…LGLPNAMLHR (193 aa)) constitute a GMPS ATP-PPase domain. Residue 235–241 (SGGVDSA) coordinates ATP.

As to quaternary structure, homodimer.

It catalyses the reaction XMP + L-glutamine + ATP + H2O = GMP + L-glutamate + AMP + diphosphate + 2 H(+). It functions in the pathway purine metabolism; GMP biosynthesis; GMP from XMP (L-Gln route): step 1/1. Its function is as follows. Catalyzes the synthesis of GMP from XMP. In Hamiltonella defensa subsp. Acyrthosiphon pisum (strain 5AT), this protein is GMP synthase [glutamine-hydrolyzing].